The chain runs to 745 residues: DNA ligase (745 aa).

The disordered stretch occupies residues methionine 1–proline 27. Residues aspartate 57 to aspartate 61, serine 106 to leucine 107, and glutamate 135 each bind NAD(+). Lysine 137 functions as the N6-AMP-lysine intermediate in the catalytic mechanism. Arginine 158 and glutamate 197 together coordinate NAD(+). The disordered stretch occupies residues glycine 216–aspartate 235. NAD(+) is bound by residues lysine 313 and lysine 337. Residues cysteine 431, cysteine 434, cysteine 450, and cysteine 456 each coordinate Zn(2+). In terms of domain architecture, BRCT spans aspartate 649–serine 738.

The protein belongs to the NAD-dependent DNA ligase family. LigA subfamily. The cofactor is Mg(2+). Mn(2+) serves as cofactor.

The catalysed reaction is NAD(+) + (deoxyribonucleotide)n-3'-hydroxyl + 5'-phospho-(deoxyribonucleotide)m = (deoxyribonucleotide)n+m + AMP + beta-nicotinamide D-nucleotide.. Its function is as follows. DNA ligase that catalyzes the formation of phosphodiester linkages between 5'-phosphoryl and 3'-hydroxyl groups in double-stranded DNA using NAD as a coenzyme and as the energy source for the reaction. It is essential for DNA replication and repair of damaged DNA. The sequence is that of DNA ligase from Thermobifida fusca (strain YX).